We begin with the raw amino-acid sequence, 430 residues long: ATP-dependent protease ATPase subunit HslU (430 aa).

ATP-binding positions include Val-18, 60 to 65, Asp-243, Glu-308, and Arg-380; that span reads GVGKTE.

Belongs to the ClpX chaperone family. HslU subfamily. As to quaternary structure, a double ring-shaped homohexamer of HslV is capped on each side by a ring-shaped HslU homohexamer. The assembly of the HslU/HslV complex is dependent on binding of ATP.

The protein localises to the cytoplasm. Functionally, ATPase subunit of a proteasome-like degradation complex; this subunit has chaperone activity. The binding of ATP and its subsequent hydrolysis by HslU are essential for unfolding of protein substrates subsequently hydrolyzed by HslV. HslU recognizes the N-terminal part of its protein substrates and unfolds these before they are guided to HslV for hydrolysis. This is ATP-dependent protease ATPase subunit HslU from Caulobacter vibrioides (strain ATCC 19089 / CIP 103742 / CB 15) (Caulobacter crescentus).